The sequence spans 82 residues: Cytochrome b559 subunit alpha (82 aa).

Residues 22–36 traverse the membrane as a helical segment; it reads VIHFVTLPSIFLAGF. Residue H24 coordinates heme.

Belongs to the PsbE/PsbF family. Heterodimer of an alpha subunit and a beta subunit. PSII is composed of 1 copy each of membrane proteins PsbA, PsbB, PsbC, PsbD, PsbE, PsbF, PsbH, PsbI, PsbJ, PsbK, PsbL, PsbM, PsbT, PsbX, PsbY, PsbZ, Psb30/Ycf12, peripheral proteins PsbO, CyanoQ (PsbQ), PsbU, PsbV and a large number of cofactors. It forms dimeric complexes. Heme b serves as cofactor.

The protein resides in the cellular thylakoid membrane. This b-type cytochrome is tightly associated with the reaction center of photosystem II (PSII). PSII is a light-driven water:plastoquinone oxidoreductase that uses light energy to abstract electrons from H(2)O, generating O(2) and a proton gradient subsequently used for ATP formation. It consists of a core antenna complex that captures photons, and an electron transfer chain that converts photonic excitation into a charge separation. This Parasynechococcus marenigrum (strain WH8102) protein is Cytochrome b559 subunit alpha.